The chain runs to 954 residues: Glycine dehydrogenase (decarboxylating) (954 aa).

Position 704 is an N6-(pyridoxal phosphate)lysine (Lys704).

The protein belongs to the GcvP family. In terms of assembly, the glycine cleavage system is composed of four proteins: P, T, L and H. It depends on pyridoxal 5'-phosphate as a cofactor.

The enzyme catalyses N(6)-[(R)-lipoyl]-L-lysyl-[glycine-cleavage complex H protein] + glycine + H(+) = N(6)-[(R)-S(8)-aminomethyldihydrolipoyl]-L-lysyl-[glycine-cleavage complex H protein] + CO2. In terms of biological role, the glycine cleavage system catalyzes the degradation of glycine. The P protein binds the alpha-amino group of glycine through its pyridoxal phosphate cofactor; CO(2) is released and the remaining methylamine moiety is then transferred to the lipoamide cofactor of the H protein. The protein is Glycine dehydrogenase (decarboxylating) of Rhizobium meliloti (strain 1021) (Ensifer meliloti).